A 559-amino-acid chain; its full sequence is Formate--tetrahydrofolate ligase (559 aa).

66–73 serves as a coordination point for ATP; sequence TPPGEGKT.

It belongs to the formate--tetrahydrofolate ligase family.

It catalyses the reaction (6S)-5,6,7,8-tetrahydrofolate + formate + ATP = (6R)-10-formyltetrahydrofolate + ADP + phosphate. The protein operates within one-carbon metabolism; tetrahydrofolate interconversion. The polypeptide is Formate--tetrahydrofolate ligase (Nocardioides sp. (strain ATCC BAA-499 / JS614)).